Reading from the N-terminus, the 441-residue chain is Probable D-serine dehydratase (441 aa).

At Lys-115 the chain carries N6-(pyridoxal phosphate)lysine.

It belongs to the serine/threonine dehydratase family. DsdA subfamily. Pyridoxal 5'-phosphate is required as a cofactor.

The enzyme catalyses D-serine = pyruvate + NH4(+). This Fusobacterium nucleatum subsp. nucleatum (strain ATCC 25586 / DSM 15643 / BCRC 10681 / CIP 101130 / JCM 8532 / KCTC 2640 / LMG 13131 / VPI 4355) protein is Probable D-serine dehydratase.